We begin with the raw amino-acid sequence, 212 residues long: Uridine kinase (212 aa).

13-20 (GASASGKS) contributes to the ATP binding site.

Belongs to the uridine kinase family.

It is found in the cytoplasm. It catalyses the reaction uridine + ATP = UMP + ADP + H(+). It carries out the reaction cytidine + ATP = CMP + ADP + H(+). The protein operates within pyrimidine metabolism; CTP biosynthesis via salvage pathway; CTP from cytidine: step 1/3. It functions in the pathway pyrimidine metabolism; UMP biosynthesis via salvage pathway; UMP from uridine: step 1/1. This chain is Uridine kinase, found in Shewanella baltica (strain OS223).